The chain runs to 248 residues: PF03932 family protein CutC (248 aa).

This sequence belongs to the CutC family. Homodimer.

The protein resides in the cytoplasm. This chain is PF03932 family protein CutC, found in Escherichia coli (strain SMS-3-5 / SECEC).